A 240-amino-acid chain; its full sequence is Endonuclease NucS 1 (240 aa).

It belongs to the NucS endonuclease family.

It localises to the cytoplasm. Its function is as follows. Cleaves both 3' and 5' ssDNA extremities of branched DNA structures. The sequence is that of Endonuclease NucS 1 from Halobacterium salinarum (strain ATCC 700922 / JCM 11081 / NRC-1) (Halobacterium halobium).